Reading from the N-terminus, the 306-residue chain is Arginase (306 aa).

Mn(2+) contacts are provided by histidine 96, aspartate 123, histidine 125, and aspartate 127. Residues 125–129 (HTDFH), 136–138 (SGN), and aspartate 178 each bind substrate. Residues aspartate 226 and aspartate 228 each coordinate Mn(2+). Substrate is bound by residues threonine 240 and glutamate 271.

It belongs to the arginase family. It depends on Mn(2+) as a cofactor.

The enzyme catalyses L-arginine + H2O = urea + L-ornithine. It functions in the pathway nitrogen metabolism; urea cycle; L-ornithine and urea from L-arginine: step 1/1. This Brucella abortus biovar 1 (strain 9-941) protein is Arginase (arcB).